Reading from the N-terminus, the 564-residue chain is Threonine--tRNA ligase (564 aa).

A catalytic region spans residues 167 to 464 (DHRSLGKQLE…LLEKTSGNFP (298 aa)). Zn(2+) is bound by residues Cys-260, His-311, and His-441.

Belongs to the class-II aminoacyl-tRNA synthetase family. In terms of assembly, homodimer. The cofactor is Zn(2+).

It is found in the cytoplasm. The catalysed reaction is tRNA(Thr) + L-threonine + ATP = L-threonyl-tRNA(Thr) + AMP + diphosphate + H(+). Functionally, catalyzes the attachment of threonine to tRNA(Thr) in a two-step reaction: L-threonine is first activated by ATP to form Thr-AMP and then transferred to the acceptor end of tRNA(Thr). Also edits incorrectly charged L-seryl-tRNA(Thr). The chain is Threonine--tRNA ligase from Mycoplasma genitalium (strain ATCC 33530 / DSM 19775 / NCTC 10195 / G37) (Mycoplasmoides genitalium).